The primary structure comprises 101 residues: Large ribosomal subunit protein bL21 (101 aa).

It belongs to the bacterial ribosomal protein bL21 family. In terms of assembly, part of the 50S ribosomal subunit. Contacts protein L20.

In terms of biological role, this protein binds to 23S rRNA in the presence of protein L20. The sequence is that of Large ribosomal subunit protein bL21 from Anaeromyxobacter dehalogenans (strain 2CP-1 / ATCC BAA-258).